A 342-amino-acid polypeptide reads, in one-letter code: Sorting nexin-15 (342 aa).

The PX domain maps to 1–130 (MSRQAKDDFL…EFFRGGEVTR (130 aa)). Residues Arg51, Ser53, Arg87, and Arg96 each coordinate a 1,2-diacyl-sn-glycero-3-phospho-(1D-myo-inositol-3-phosphate). Arg105 is modified (omega-N-methylarginine). 2 positions are modified to phosphoserine: Ser201 and Ser227. A disordered region spans residues 245–267 (DQEPWEPGGQEEEEDGEGGPTPA). Residues 265–342 (TPAYLSQATE…LRLHLSQLPP (78 aa)) form the MIT domain.

This sequence belongs to the sorting nexin family. Homodimer. Interacts with SNX1, SNX2 and SNX4. As to expression, widely expressed.

It localises to the cytoplasm. The protein localises to the membrane. It is found in the cytoplasmic vesicle membrane. In terms of biological role, may be involved in several stages of intracellular trafficking. Overexpression of SNX15 disrupts the normal trafficking of proteins from the plasma membrane to recycling endosomes or the TGN. The chain is Sorting nexin-15 (SNX15) from Homo sapiens (Human).